The sequence spans 124 residues: Small ribosomal subunit protein bS6 (124 aa).

The disordered stretch occupies residues 99 to 124; that stretch reads PLPAPRVMPGSEAAQQQQAEAAASAD. Over residues 109 to 124 the composition is skewed to low complexity; it reads SEAAQQQQAEAAASAD.

It belongs to the bacterial ribosomal protein bS6 family.

In terms of biological role, binds together with bS18 to 16S ribosomal RNA. The polypeptide is Small ribosomal subunit protein bS6 (Synechococcus sp. (strain CC9605)).